The primary structure comprises 129 residues: Cortical cell-delineating protein (129 aa).

Residues 1 to 19 constitute a signal peptide (or 21); that stretch reads MAPKVALFLALSLLFAATA. N-linked (GlcNAc...) asparagine glycosylation is present at Asn-25. 2 tandem repeats follow at residues 29 to 34 and 35 to 40. The interval 29 to 40 is 2 X 6 AA tandem repeats of P-V-V-P-T-P; that stretch reads PVVPTPPVVPTP.

To carrot DC2.15 and PEMB3. As to expression, cortical ground meristem of developing roots.

Delineates a novel subset of developing cortical cells. It is probably involved in some aspect of transport of molecules to or from the vasculature. The polypeptide is Cortical cell-delineating protein (Zea mays (Maize)).